The chain runs to 227 residues: Non-structural protein 3d (227 aa).

A CoV 3a-like viroporin TM domain is found at Ala27–Asp130. The next 3 membrane-spanning stretches (helical) occupy residues Val39–Phe59, Ala71–Asp91, and Gln93–Ala113. Residues Ser134–Leu191 enclose the CoV 3a-like viroporin CD domain.

Its subcellular location is the host membrane. The chain is Non-structural protein 3d from Bat coronavirus HKU4 (BtCoV).